Reading from the N-terminus, the 195-residue chain is MILSDQDILARLADGDLAIEPLEDVDLQVQPASVDVRLGRRFLEFERANVPCIHPNREDEVDEYVTETVVEDGDEFILHPGDFVLGTTKERVEVPRDLVAQVEGRSSLGRLAVVVHATAGFIDPGFNGRVTLELSNLGKVPVALTPEMRISQLVFTELTSPADRPYGDERGSKYQDQDGPQASRIRGDREFGGTQ.

Residues 105-110 (RSSLGR), aspartate 123, 131-133 (TLE), glutamine 152, tyrosine 166, lysine 173, and glutamine 177 each bind dCTP. Glutamate 133 functions as the Proton donor/acceptor in the catalytic mechanism. Residues 161-195 (PADRPYGDERGSKYQDQDGPQASRIRGDREFGGTQ) are disordered. A compositionally biased stretch (basic and acidic residues) spans 165–176 (PYGDERGSKYQD). The segment covering 185-195 (IRGDREFGGTQ) has biased composition (basic and acidic residues).

The protein belongs to the dCTP deaminase family. Homotrimer.

The catalysed reaction is dCTP + 2 H2O = dUMP + NH4(+) + diphosphate. The protein operates within pyrimidine metabolism; dUMP biosynthesis; dUMP from dCTP: step 1/1. Bifunctional enzyme that catalyzes both the deamination of dCTP to dUTP and the hydrolysis of dUTP to dUMP without releasing the toxic dUTP intermediate. In Halobacterium salinarum (strain ATCC 700922 / JCM 11081 / NRC-1) (Halobacterium halobium), this protein is dCTP deaminase, dUMP-forming.